The following is a 478-amino-acid chain: BTB/POZ domain-containing protein 17 (478 aa).

Residues 1-28 (MPRRGYSKPGSWGSFWAMLTLVGLVTHA) form the signal peptide. 3 N-linked (GlcNAc...) asparagine glycosylation sites follow: N61, N100, and N195. The BTB domain maps to 63 to 132 (SDVVLRVQAA…LYCGELTVLL (70 aa)). The BACK domain occupies 169–269 (AVGWYHYAVG…IPPAQLFQLQ (101 aa)).

The protein resides in the secreted. The protein is BTB/POZ domain-containing protein 17 (BTBD17) of Homo sapiens (Human).